Reading from the N-terminus, the 291-residue chain is Homoserine kinase (291 aa).

ATP is bound at residue Arg-80 to Ala-90.

The protein belongs to the GHMP kinase family. Homoserine kinase subfamily.

It localises to the cytoplasm. The enzyme catalyses L-homoserine + ATP = O-phospho-L-homoserine + ADP + H(+). It participates in amino-acid biosynthesis; L-threonine biosynthesis; L-threonine from L-aspartate: step 4/5. Its function is as follows. Catalyzes the ATP-dependent phosphorylation of L-homoserine to L-homoserine phosphate. The chain is Homoserine kinase from Natronomonas pharaonis (strain ATCC 35678 / DSM 2160 / CIP 103997 / JCM 8858 / NBRC 14720 / NCIMB 2260 / Gabara) (Halobacterium pharaonis).